An 86-amino-acid polypeptide reads, in one-letter code: Large ribosomal subunit protein uL23 (86 aa).

This sequence belongs to the universal ribosomal protein uL23 family. In terms of assembly, part of the 50S ribosomal subunit. Contacts protein L29.

Its function is as follows. Binds to 23S rRNA. One of the proteins that surrounds the polypeptide exit tunnel on the outside of the ribosome. This chain is Large ribosomal subunit protein uL23, found in Methanocaldococcus jannaschii (strain ATCC 43067 / DSM 2661 / JAL-1 / JCM 10045 / NBRC 100440) (Methanococcus jannaschii).